The following is a 339-amino-acid chain: Cathepsin B (339 aa).

The signal sequence occupies residues 1–17; that stretch reads MWWLWASLCCLLALGDA. Positions 18 to 79 are cleaved as a propeptide — activation peptide; the sequence is RSRPSFHPLS…QRVMFTEDLK (62 aa). Cystine bridges form between Cys-93-Cys-122, Cys-105-Cys-150, Cys-141-Cys-207, Cys-142-Cys-146, Cys-179-Cys-211, and Cys-187-Cys-198. Cys-108 is a catalytic residue. N-linked (GlcNAc...) asparagine glycosylation is present at Asn-192. An N6-acetyllysine modification is found at Lys-220. Catalysis depends on residues His-278 and Asn-298. Positions 334-339 are excised as a propeptide; sequence QYWEKI.

Belongs to the peptidase C1 family. In terms of assembly, dimer of a heavy chain and a light chain cross-linked by a disulfide bond. Interacts with SRPX2. Directly interacts with SHKBP1.

The protein localises to the lysosome. Its subcellular location is the melanosome. The protein resides in the secreted. It is found in the extracellular space. It localises to the apical cell membrane. The enzyme catalyses Hydrolysis of proteins with broad specificity for peptide bonds. Preferentially cleaves -Arg-Arg-|-Xaa bonds in small molecule substrates (thus differing from cathepsin L). In addition to being an endopeptidase, shows peptidyl-dipeptidase activity, liberating C-terminal dipeptides.. Its function is as follows. Thiol protease which is believed to participate in intracellular degradation and turnover of proteins. Cleaves matrix extracellular phosphoglycoprotein MEPE. Involved in the solubilization of cross-linked TG/thyroglobulin in the thyroid follicle lumen. Has also been implicated in tumor invasion and metastasis. In Macaca fascicularis (Crab-eating macaque), this protein is Cathepsin B (CTSB).